The primary structure comprises 247 residues: 23S rRNA (guanosine-2'-O-)-methyltransferase RlmB (247 aa).

S-adenosyl-L-methionine-binding residues include Gly-197, Ile-217, and Leu-226.

The protein belongs to the class IV-like SAM-binding methyltransferase superfamily. RNA methyltransferase TrmH family. RlmB subfamily.

It is found in the cytoplasm. The catalysed reaction is guanosine(2251) in 23S rRNA + S-adenosyl-L-methionine = 2'-O-methylguanosine(2251) in 23S rRNA + S-adenosyl-L-homocysteine + H(+). Functionally, specifically methylates the ribose of guanosine 2251 in 23S rRNA. This Vibrio vulnificus (strain CMCP6) protein is 23S rRNA (guanosine-2'-O-)-methyltransferase RlmB.